We begin with the raw amino-acid sequence, 262 residues long: DNA repair protein RecO (262 aa).

It belongs to the RecO family.

In terms of biological role, involved in DNA repair and RecF pathway recombination. This Acidovorax ebreus (strain TPSY) (Diaphorobacter sp. (strain TPSY)) protein is DNA repair protein RecO.